The primary structure comprises 474 residues: RNA-binding protein Nova-1 (474 aa).

The segment covering 1–12 (MAAAPIQQNGTH) has biased composition (polar residues). Positions 1–43 (MAAAPIQQNGTHTGVPIDLDPPDSRKRPLEAPPEAGSTKRTNT) are disordered. Positions 26–42 (KRPLEAPPEAGSTKRTN) match the Bipartite nuclear localization signal motif. 3 consecutive KH domains span residues 48–115 (QYFL…HGFI), 146–212 (IKQV…VELI), and 396–463 (KDVV…QYLI). The required for RNA binding stretch occupies residues 394–474 (GSKDVVEIAV…QRITYEQGVR (81 aa)).

Interacts with PTBP2; the interaction is direct.

The protein resides in the nucleus. Functions to regulate alternative splicing in neurons by binding pre-mRNA in a sequence-specific manner to activate exon inclusion or exclusion. It binds specifically to the sequences 5'-YCAY-3' and regulates splicing in only a subset of regulated exons. Binding to an exonic 5'-YCAY-3' cluster changes the protein complexes assembled on pre-mRNA, blocking U1 snRNP binding and exon inclusion, whereas binding to an intronic 5'-YCAY-3' cluster enhances spliceosome assembly and exon inclusion. Binding to 5'-YCAY-3' clusters results in a local and asymmetric action to regulate spliceosome assembly and alternative splicing in neurons. Binding to an exonic 5'-YCAY-3' cluster changed the protein complexes assembled on pre-mRNA, blocking U1 snRNP (small nuclear ribonucleoprotein) binding and exon inclusion, whereas binding to an intronic 5'-YCAY-3' cluster enhanced spliceosome assembly and exon inclusion. With NOVA1, they perform unique biological functions in different brain areas and cell types. Autoregulates its own expression by acting as a splicing repressor. Acts to activate the inclusion of exon E3A in the glycine receptor alpha-2 chain and of exon E9 in gamma-aminobutyric-acid receptor gamma-2 subunit via a distal downstream UCAU-rich intronic splicing enhancer. Acts to regulate a novel glycine receptor alpha-2 chain splice variant (alpha-2N) in developing spinal cord. This chain is RNA-binding protein Nova-1, found in Rattus norvegicus (Rat).